The sequence spans 651 residues: Probable inactive purple acid phosphatase 9 (651 aa).

An N-terminal signal peptide occupies residues 1–20; it reads MIAAVYTLFFFFLLISSVYS. 3 N-linked (GlcNAc...) asparagine glycosylation sites follow: Asn32, Asn96, and Asn202. Fe cation-binding residues include Asp305 and Tyr308. Zn(2+) is bound at residue Asp305. Residue Asn338 participates in Zn(2+) binding. Asn338 provides a ligand contact to substrate. N-linked (GlcNAc...) asparagine glycosylation is found at Asn378 and Asn432. His444 is a binding site for Zn(2+). A glycan (N-linked (GlcNAc...) asparagine) is linked at Asn475. His483 contacts Zn(2+). 483 to 485 lines the substrate pocket; the sequence is HVH. Residue His485 coordinates Fe cation. Residues Asn495 and Asn640 are each glycosylated (N-linked (GlcNAc...) asparagine).

This sequence belongs to the metallophosphoesterase superfamily. Purple acid phosphatase family. As to quaternary structure, homodimer. It depends on Fe cation as a cofactor. Requires Zn(2+) as cofactor. In terms of tissue distribution, expressed in roots, stems, leaves, flowers and siliques.

It is found in the secreted. In Arabidopsis thaliana (Mouse-ear cress), this protein is Probable inactive purple acid phosphatase 9 (PAP9).